The sequence spans 92 residues: RNA-binding protein Hfq (92 aa).

The Sm domain occupies 9-68 (DPFLNALRRERVPVSVYLVNGIKLQGTIESFDQFVVLLRNTVSQMVYKHAISTVVPARNV). The segment at 73–92 (GGGYVQSNEGNQAEDDDVEQ) is disordered.

Belongs to the Hfq family. As to quaternary structure, homohexamer.

In terms of biological role, RNA chaperone that binds small regulatory RNA (sRNAs) and mRNAs to facilitate mRNA translational regulation in response to envelope stress, environmental stress and changes in metabolite concentrations. Also binds with high specificity to tRNAs. The polypeptide is RNA-binding protein Hfq (Xanthomonas axonopodis pv. citri (strain 306)).